The sequence spans 172 residues: Stellate protein CG33247 (172 aa).

It belongs to the casein kinase 2 subunit beta family. Interacts in vitro with the casein kinase 2 alpha subunit (CkII-alpha). The relevance of such interaction is however unclear in vivo. In terms of tissue distribution, probably not expressed in wild-type flies. In males lacking the Y chromosome, it is testis-specific and constitutes the main component of star-shaped crystals.

In terms of biological role, unknown. In males lacking the Y chromosome, its strong overexpression leads to the appearance of proteinaceous star-shaped crystals in the primary spermatocytes causing meiotic drive, possibly by interfering with normal casein kinase 2 activity. The protein is Stellate protein CG33247 (Ste:CG33247) of Drosophila melanogaster (Fruit fly).